The sequence spans 494 residues: PTS system cellobiose-specific EIIC component (494 aa).

In terms of domain architecture, PTS EIIC type-3 spans 8-481; sequence MEKYLVPVAA…IITFVIWVPF (474 aa). The next 9 membrane-spanning stretches (helical) occupy residues 32–52, 92–112, 119–139, 188–208, 227–247, 274–294, 355–375, 406–426, and 463–483; these read FIGMLPATLAGALAAMISAIV, ISALVNQGTLTVIGLIFAFSW, AYGVNDLAGGIVSLATLFAGL, AYFTVIIMGALAVIIYAKLML, FLAIIPTIAALYIVGLIYYII, IFSVLIVTLFVSVFWFFGLHG, AFAWFGGSGGTITLVIAIILF, VVLNAIFFIPFAVAPLISVII, and AIVLTIINLIITFVIWVPFVI.

The protein resides in the cell membrane. The phosphoenolpyruvate-dependent sugar phosphotransferase system (PTS), a major carbohydrate active transport system, catalyzes the phosphorylation of incoming sugar substrates concomitant with their translocation across the cell membrane. Involved in cellobiose transport with PtcA and PtcB. This system can also transport lactose. This is PTS system cellobiose-specific EIIC component from Lactococcus lactis subsp. lactis (strain IL1403) (Streptococcus lactis).